The following is a 1450-amino-acid chain: Inactive serine/threonine-protein kinase TEX14 (1450 aa).

ANK repeat units lie at residues 27-54 (LHEY…AVNT), 55-84 (QGQS…DPNH), and 88-117 (DGST…DLRL). Phosphoserine is present on residues Ser175 and Ser186. A Protein kinase domain is found at 199–512 (IISAQNIYSF…ILKNDLKEFI (314 aa)). ATP-binding positions include 205–213 (IYSFGFGKF) and Lys267. Ser431 carries the post-translational modification Phosphoserine; by PLK1. Residues Ser561 and Ser662 each carry the phosphoserine modification. A disordered region spans residues 700 to 720 (SDSLGSLNLPEPTREAKGKTS). The GPPX3Y signature appears at 791–797 (GPPSLAY). Disordered regions lie at residues 852-906 (VSEE…MASV), 947-977 (PPWN…RGPE), 992-1012 (DEPK…DKNK), and 1035-1062 (QPEQ…SSPI). Composition is skewed to polar residues over residues 875–886 (KQSTGEQLPSTQ) and 894–906 (KNTN…MASV). Residues 889–897 (RESLEKNTN) carry the D-box motif. Over residues 992–1011 (DEPKGNTKFGKMDNSDCDKN) the composition is skewed to basic and acidic residues. A compositionally biased stretch (polar residues) spans 1038 to 1061 (QNEASQASCDTSVGTEKFYSTSSP). Phosphoserine occurs at positions 1060 and 1221. Disordered regions lie at residues 1261–1282 (THAT…QQHL) and 1300–1418 (KQQQ…SLGT). 2 stretches are compositionally biased toward polar residues: residues 1300-1311 (KQQQVSSLASHE) and 1332-1344 (TNSS…LSSR). A phosphoserine mark is found at Ser1357 and Ser1358. 2 stretches are compositionally biased toward basic and acidic residues: residues 1383 to 1397 (STRE…VVEQ) and 1404 to 1413 (SIKPERRESD). 2 positions are modified to phosphoserine: Ser1412 and Ser1449.

This sequence belongs to the protein kinase superfamily. In terms of assembly, interacts with KIF23 and RBM44. Interacts with CEP55; inhibiting interaction between CEP55 and PDCD6IP/ALIX and TSG101. Post-translationally, phosphorylated on Thr residues by CDK1 during early phases of mitosis, promoting the interaction with PLK1 and recruitment to kinetochores. Phosphorylated on Ser-431 by PLK1 during late prometaphase promotes the rapid depletion from kinetochores and its subsequent degradation by the APC/C complex. As to expression, detected in testis and spermatogonia. Not detectable in the other tissues tested.

The protein resides in the cytoplasm. The protein localises to the midbody. Its subcellular location is the chromosome. It is found in the centromere. It localises to the kinetochore. Functionally, required both for the formation of intercellular bridges during meiosis and for kinetochore-microtubule attachment during mitosis. Intercellular bridges are evolutionarily conserved structures that connect differentiating germ cells and are required for spermatogenesis and male fertility. Acts by promoting the conversion of midbodies into intercellular bridges via its interaction with CEP55: interaction with CEP55 inhibits the interaction between CEP55 and PDCD6IP/ALIX and TSG101, blocking cell abscission and leading to transform midbodies into intercellular bridges. Also plays a role during mitosis: recruited to kinetochores by PLK1 during early mitosis and regulates the maturation of the outer kinetochores and microtubule attachment. Has no protein kinase activity in vitro. This is Inactive serine/threonine-protein kinase TEX14 (Tex14) from Mus musculus (Mouse).